The primary structure comprises 311 residues: Methionyl-tRNA formyltransferase (311 aa).

110 to 113 (SLLP) provides a ligand contact to (6S)-5,6,7,8-tetrahydrofolate.

The protein belongs to the Fmt family.

It catalyses the reaction L-methionyl-tRNA(fMet) + (6R)-10-formyltetrahydrofolate = N-formyl-L-methionyl-tRNA(fMet) + (6S)-5,6,7,8-tetrahydrofolate + H(+). Attaches a formyl group to the free amino group of methionyl-tRNA(fMet). The formyl group appears to play a dual role in the initiator identity of N-formylmethionyl-tRNA by promoting its recognition by IF2 and preventing the misappropriation of this tRNA by the elongation apparatus. The sequence is that of Methionyl-tRNA formyltransferase from Streptococcus pneumoniae (strain P1031).